The chain runs to 382 residues: S-adenosylmethionine synthase (382 aa).

His-15 contributes to the ATP binding site. Mg(2+) is bound at residue Asp-17. Residue Glu-43 coordinates K(+). L-methionine contacts are provided by Glu-56 and Gln-99. The flexible loop stretch occupies residues 99–109; the sequence is QSGDIAQGVDR. ATP-binding positions include 164-166, 230-231, Asp-239, 245-246, Ala-262, and Lys-266; these read DAK, KF, and RK. Asp-239 is a binding site for L-methionine. Lys-270 provides a ligand contact to L-methionine.

Belongs to the AdoMet synthase family. In terms of assembly, homotetramer; dimer of dimers. Mg(2+) serves as cofactor. K(+) is required as a cofactor.

The protein localises to the cytoplasm. The catalysed reaction is L-methionine + ATP + H2O = S-adenosyl-L-methionine + phosphate + diphosphate. The protein operates within amino-acid biosynthesis; S-adenosyl-L-methionine biosynthesis; S-adenosyl-L-methionine from L-methionine: step 1/1. Its function is as follows. Catalyzes the formation of S-adenosylmethionine (AdoMet) from methionine and ATP. The overall synthetic reaction is composed of two sequential steps, AdoMet formation and the subsequent tripolyphosphate hydrolysis which occurs prior to release of AdoMet from the enzyme. This is S-adenosylmethionine synthase from Dichelobacter nodosus (strain VCS1703A).